The chain runs to 376 residues: Phytanoyl-CoA hydroxylase-interacting protein-like (376 aa).

Phosphoserine is present on residues Ser-12 and Ser-15. N-linked (GlcNAc...) asparagine glycosylation is present at Asn-23. Phosphoserine is present on Ser-25. Asn-37 is a glycosylation site (N-linked (GlcNAc...) asparagine). The region spanning 52-161 (VPHNIKISNI…EIIEFCTADY (110 aa)) is the Fibronectin type-III domain.

Belongs to the PHYHIP family.

Functionally, may play a role in the development of the central system. This chain is Phytanoyl-CoA hydroxylase-interacting protein-like (PHYHIPL), found in Homo sapiens (Human).